A 566-amino-acid chain; its full sequence is Urease subunit alpha (566 aa).

In terms of domain architecture, Urease spans 128-566 (GGVDTHIHFI…LPMAQRYFLF (439 aa)). Positions 133, 135, and 216 each coordinate Ni(2+). K216 is subject to N6-carboxylysine. Residue H218 participates in substrate binding. 2 residues coordinate Ni(2+): H245 and H271. Residue H319 is the Proton donor of the active site. D359 is a Ni(2+) binding site.

The protein belongs to the metallo-dependent hydrolases superfamily. Urease alpha subunit family. In terms of assembly, may form a heterohexamer of 3 UreC (alpha) and 3 UreAB (gamma/beta) subunits. May also form a heterotrimer of UreA (gamma), UreB (beta) and UreC (alpha) subunits. Three heterotrimers associate to form the active enzyme. The cofactor is Ni cation. Carboxylation allows a single lysine to coordinate two nickel ions.

Its subcellular location is the cytoplasm. The catalysed reaction is urea + 2 H2O + H(+) = hydrogencarbonate + 2 NH4(+). Its pathway is nitrogen metabolism; urea degradation; CO(2) and NH(3) from urea (urease route): step 1/1. This chain is Urease subunit alpha, found in Pseudomonas syringae pv. tomato (strain ATCC BAA-871 / DC3000).